Reading from the N-terminus, the 1040-residue chain is uncharacterized protein (1040 aa).

Residues Arg-403–Lys-588 enclose the Helicase ATP-binding domain. Asp-416–Thr-423 is an ATP binding site. The segment at Cys-746–Glu-798 adopts an RING-type zinc-finger fold. The region spanning Lys-866 to Ser-1032 is the Helicase C-terminal domain.

This sequence belongs to the SNF2/RAD54 helicase family.

It localises to the nucleus. This is an uncharacterized protein from Schizosaccharomyces pombe (strain 972 / ATCC 24843) (Fission yeast).